The primary structure comprises 397 residues: Ribosomal RNA large subunit methyltransferase I (397 aa).

Residues 2-79 (TAAIYLVKGR…KEEINKAFFV (78 aa)) form the PUA domain.

It belongs to the methyltransferase superfamily. RlmI family.

It is found in the cytoplasm. The enzyme catalyses cytidine(1962) in 23S rRNA + S-adenosyl-L-methionine = 5-methylcytidine(1962) in 23S rRNA + S-adenosyl-L-homocysteine + H(+). Its function is as follows. Specifically methylates the cytosine at position 1962 (m5C1962) of 23S rRNA. This chain is Ribosomal RNA large subunit methyltransferase I, found in Vibrio parahaemolyticus serotype O3:K6 (strain RIMD 2210633).